The chain runs to 1191 residues: Solute carrier family 12 member 2 (1191 aa).

The segment at 1-166 (MEPAFPASSA…MSEGSLHSSG (166 aa)) is disordered. At 1-258 (MEPAFPASSA…ADNKGVVKFG (258 aa)) the chain is on the cytoplasmic side. 4 stretches are compositionally biased toward low complexity: residues 13 to 25 (QSQSGPEPGAGQQ), 59 to 69 (KGQTAAQPAAA), 80 to 99 (AAAPSPASPAAAAEPPAAAA), and 131 to 141 (SASSAHGGHQP). Residues 142 to 155 (PSESMNGYPQNGDT) are compositionally biased toward polar residues. Phosphothreonine; by OXSR1 and STK39 occurs at positions 175, 179, and 184. 2 positions are modified to phosphothreonine: Thr-189 and Thr-202. Residues 259-288 (WIKGVLVRCMLNIWGVMLFIRLSWIVGHAG) form a discontinuously helical membrane-spanning segment. Leu-269 contributes to the Na(+) binding site. Residues Asn-270 and Ile-271 each contribute to the K(+) site. Residue Trp-272 coordinates Na(+). Gly-273, Val-274, and Met-275 together coordinate chloride. Residues 289–308 (IGLALLVIGTATVVTTITGL) form a helical membrane-spanning segment. Over 309–339 (STSAITTNGFVRGGGAYYLISRSLGPEFGGA) the chain is Cytoplasmic. A helical membrane pass occupies residues 340 to 367 (IGLIFAFANAVAVAMYVVGFAETVRDLL). Phe-344 contacts chloride. Residue Tyr-355 participates in K(+) binding. At 368-377 (VEHNALMIDE) the chain is on the extracellular side. Residues 378-401 (MSDIRIIGSVTIVVLFGISVAGME) form a helical membrane-spanning segment. The Cytoplasmic portion of the chain corresponds to 402–404 (WEA). Residues 405–426 (KAQIVLLGILLLAIVNFTVGTF) form a helical membrane-spanning segment. The Extracellular portion of the chain corresponds to 427 to 458 (IPANDKRAKGFFNYRGEIFSENFVPDFRDGED). Residues 459 to 476 (FFSVFAIFFPAATGILAG) form a discontinuously helical membrane-spanning segment. Positions 468, 469, and 471 each coordinate K(+). 2 residues coordinate chloride: Pro-468 and Ala-469. Chloride contacts are provided by Gly-472 and Ile-473. Residues 477 to 491 (ANISGDLADPQLAIP) are Cytoplasmic-facing. Residues 492-513 (KGTLLAILITTIVYAGAAVSVG) traverse the membrane as a helical segment. Topologically, residues 514-571 (SCIVREATGNLTDAIIPGTVTNCTNVACKLGFNFSSCATNKCSYGLMNDFQVMSLVSG) are extracellular. N-linked (GlcNAc...) asparagine glycosylation is found at Asn-523 and Asn-535. Cys-536 and Cys-541 are oxidised to a cystine. A glycan (N-linked (GlcNAc...) asparagine) is linked at Asn-546. The cysteines at positions 550 and 555 are disulfide-linked. Residues 572–596 (FGPLITAGIFSATLSSALASLVSAP) form a helical membrane-spanning segment. Residues Ala-583, Ser-586, and Ser-587 each coordinate Na(+). At 597–624 (KIFQALCKDNIYPGLHVFSVGYGKNNEP) the chain is on the cytoplasmic side. The next 2 helical transmembrane spans lie at 625 to 645 (LRGYVLTFFIGLGFILIAELN) and 646 to 664 (VIAPIISNFFLASYALINF). Positions 655 and 659 each coordinate chloride. Topologically, residues 665-687 (SVFHASLAKSPGWRPAFRFYNMW) are cytoplasmic. The next 2 helical transmembrane spans lie at 688-705 (ISLIGAILCCGVMFVINW) and 706-718 (WAALLTNVIVLAL). Topologically, residues 719-1191 (YIYVTYKKPD…NHQSVLTFYS (473 aa)) are cytoplasmic. Positions 734 to 751 (STQALTYLNALQHAIRLT) are scissor helix. Residues 929 to 972 (HSDADSSKPSSKSVSETNSPAVCQDQKDEEDDGKASTQPLLKKE) are disordered. The span at 935–948 (SKPSSKSVSETNSP) shows a compositional bias: low complexity. Phosphothreonine is present on Thr-1114.

This sequence belongs to the SLC12A transporter family. As to quaternary structure, homodimer. Post-translationally, phosphorylated at Thr-175, Thr-179 and Thr-184 by OXSR1/OSR1 and STK39/SPAK downstream of WNK kinases (WNK1, WNK2, WNK3 or WNK4), promoting its activity. In terms of tissue distribution, strongly expressed in rectal gland, brain, gill and intestine. Also detected at lower levels in heart, kidney, and testis.

The protein resides in the basolateral cell membrane. It carries out the reaction K(+)(out) + 2 chloride(out) + Na(+)(out) = K(+)(in) + 2 chloride(in) + Na(+)(in). Its activity is regulated as follows. Activated following phosphorylation by OXSR1/OSR1 and STK39/SPAK. Inhibited by bumetanide. Cation-chloride cotransporter which mediates the electroneutral transport of chloride, potassium and/or sodium ions across the membrane. Plays a vital role in the regulation of ionic balance and cell volume. This Squalus acanthias (Spiny dogfish) protein is Solute carrier family 12 member 2 (SLC12A2).